The following is a 131-amino-acid chain: Fumarate reductase subunit C (131 aa).

The next 3 membrane-spanning stretches (helical) occupy residues 30–50 (EGTA…LFAL), 63–83 (FLQN…ALLH), and 109–129 (IIKS…FVAL).

It belongs to the FrdC family. Part of an enzyme complex containing four subunits: a flavoprotein (FrdA), an iron-sulfur protein (FrdB), and two hydrophobic anchor proteins (FrdC and FrdD).

It is found in the cell inner membrane. Its function is as follows. Two distinct, membrane-bound, FAD-containing enzymes are responsible for the catalysis of fumarate and succinate interconversion; fumarate reductase is used in anaerobic growth, and succinate dehydrogenase is used in aerobic growth. Anchors the catalytic components of the fumarate reductase complex to the cell inner membrane, binds quinones. The sequence is that of Fumarate reductase subunit C from Shigella dysenteriae serotype 1 (strain Sd197).